The following is a 71-amino-acid chain: DNA gyrase inhibitor YacG (71 aa).

4 residues coordinate Zn(2+): C9, C12, C28, and C32. The tract at residues 43-71 (EEKRIPSQSESNDSDEWSEMPEQDPKPFN) is disordered. A compositionally biased stretch (acidic residues) spans 54 to 64 (NDSDEWSEMPE).

Belongs to the DNA gyrase inhibitor YacG family. In terms of assembly, interacts with GyrB. The cofactor is Zn(2+).

In terms of biological role, inhibits all the catalytic activities of DNA gyrase by preventing its interaction with DNA. Acts by binding directly to the C-terminal domain of GyrB, which probably disrupts DNA binding by the gyrase. The protein is DNA gyrase inhibitor YacG of Proteus mirabilis (strain HI4320).